The following is a 402-amino-acid chain: Oxysterol-binding protein 12 (402 aa).

The segment at 333-366 (NNNNDKETAEEKAKIEEKQRKEESERREKGILWE) is disordered. Over residues 336 to 366 (NDKETAEEKAKIEEKQRKEESERREKGILWE) the composition is skewed to basic and acidic residues.

The protein belongs to the OSBP family.

The sequence is that of Oxysterol-binding protein 12 (osbL) from Dictyostelium discoideum (Social amoeba).